A 152-amino-acid polypeptide reads, in one-letter code: Ribosome maturation factor RimP (152 aa).

This sequence belongs to the RimP family.

Its subcellular location is the cytoplasm. Its function is as follows. Required for maturation of 30S ribosomal subunits. The sequence is that of Ribosome maturation factor RimP from Burkholderia lata (strain ATCC 17760 / DSM 23089 / LMG 22485 / NCIMB 9086 / R18194 / 383).